The chain runs to 308 residues: Tyrosine recombinase XerD (308 aa).

Residues 13 to 97 enclose the Core-binding (CB) domain; that stretch reads PSSTEAIQRF…VFKRFFQWAL (85 aa). One can recognise a Tyr recombinase domain in the interval 118–302; the sequence is RVPKTLSEAQ…ARERLRTLHA (185 aa). Residues R158, K183, H254, R257, and H280 contribute to the active site. The active-site O-(3'-phospho-DNA)-tyrosine intermediate is the Y289.

This sequence belongs to the 'phage' integrase family. XerD subfamily. As to quaternary structure, forms a cyclic heterotetrameric complex composed of two molecules of XerC and two molecules of XerD.

The protein localises to the cytoplasm. Its function is as follows. Site-specific tyrosine recombinase, which acts by catalyzing the cutting and rejoining of the recombining DNA molecules. The XerC-XerD complex is essential to convert dimers of the bacterial chromosome into monomers to permit their segregation at cell division. It also contributes to the segregational stability of plasmids. The protein is Tyrosine recombinase XerD of Ralstonia nicotianae (strain ATCC BAA-1114 / GMI1000) (Ralstonia solanacearum).